The following is a 256-amino-acid chain: Pimeloyl-[acyl-carrier protein] methyl ester esterase (256 aa).

In terms of domain architecture, AB hydrolase-1 spans histidine 15–proline 242. Substrate contacts are provided by residues tryptophan 22, serine 82–leucine 83, and phenylalanine 143–glutamine 147. Serine 82 (nucleophile) is an active-site residue. Active-site residues include aspartate 207 and histidine 235. Histidine 235 contributes to the substrate binding site.

This sequence belongs to the AB hydrolase superfamily. Carboxylesterase BioH family. As to quaternary structure, monomer.

Its subcellular location is the cytoplasm. The catalysed reaction is 6-carboxyhexanoyl-[ACP] methyl ester + H2O = 6-carboxyhexanoyl-[ACP] + methanol + H(+). The protein operates within cofactor biosynthesis; biotin biosynthesis. The physiological role of BioH is to remove the methyl group introduced by BioC when the pimeloyl moiety is complete. It allows to synthesize pimeloyl-ACP via the fatty acid synthetic pathway through the hydrolysis of the ester bonds of pimeloyl-ACP esters. In Salmonella newport (strain SL254), this protein is Pimeloyl-[acyl-carrier protein] methyl ester esterase.